The primary structure comprises 608 residues: Phosphoenolpyruvate carboxykinase [GTP] (608 aa).

Substrate is bound by residues R82 and 222–224 (YGG). Mn(2+) is bound by residues K231 and H251. S273 contributes to the substrate binding site. GTP is bound at residue 274 to 279 (ACGKTN). The active site involves C275. D298 is a binding site for Mn(2+). Residue 389-391 (NSR) coordinates substrate. GTP-binding positions include R391, R422, and 517–520 (FGDN).

The protein belongs to the phosphoenolpyruvate carboxykinase [GTP] family. Monomer. Mn(2+) serves as cofactor.

Its subcellular location is the cytoplasm. The enzyme catalyses oxaloacetate + GTP = phosphoenolpyruvate + GDP + CO2. Its pathway is carbohydrate biosynthesis; gluconeogenesis. Functionally, catalyzes the conversion of oxaloacetate (OAA) to phosphoenolpyruvate (PEP), the rate-limiting step in the metabolic pathway that produces glucose from lactate and other precursors derived from the citric acid cycle. The sequence is that of Phosphoenolpyruvate carboxykinase [GTP] from Paenarthrobacter aurescens (strain TC1).